The sequence spans 1311 residues: Suppressor of presenilin protein 4 (1311 aa).

A compositionally biased stretch (polar residues) spans 1 to 11 (MSSEPTSSIES). 2 disordered regions span residues 1–58 (MSSE…DDLN) and 75–95 (MFEDDEEDTVSRRRTRRSTAH). 2 C2H2-type zinc fingers span residues 112–134 (HACHKCPSRYESKSSLANHTKMH) and 141–163 (FACELCDFSASTLKSLTHHNNIH). The disordered stretch occupies residues 226-304 (EFDTTPPPIL…PPPVRKDVEK (79 aa)). The span at 280–293 (SPKGSLPSSSASSV) shows a compositional bias: low complexity. 4 C2H2-type zinc fingers span residues 327–349 (QRCPHCPFTTSTVTRLNRHSGGH), 355–379 (YICPSENCNFMCRKAGFLQKHYILH), 451–476 (KKCNIGECEFLTQTLTQLIVHKVKTH), and 487–510 (FLCLTCGHRAKSYAALRTHKLIEH). The interval 544–563 (VKEEPKEADGDESGDESFDS) is disordered. Positions 552 to 561 (DGDESGDESF) are enriched in acidic residues. C2H2-type zinc fingers lie at residues 585–607 (FCCNMCPYKAPTMNRCQRHYDKH), 613–635 (FKCQYCSWSSRSKEVIVNHEKLH), 709–731 (FQCTDCPYTSKYRGDMRSHKKRH), 737–759 (YRCVQCTYTTNRPVSLKDHLKQH), 794–816 (YCCDKCPYVTLALGCLWRHHRNH), and 823–845 (NICSNCSYSSIDQRKMEEHTIIH). The interval 865 to 1002 (RPVSSLTDLN…ESPEPDESVE (138 aa)) is disordered. Basic and acidic residues predominate over residues 874–897 (NSEKMNERKSTKRKMLDKVEKMEV). A compositionally biased stretch (acidic residues) spans 898 to 907 (GEDEEDDEES). Over residues 908 to 920 (VDKGTDDGDYKQR) the composition is skewed to basic and acidic residues. Positions 956-979 (NRINYSLLSKNGSGKPTPSTSSAN) are enriched in polar residues. 6 consecutive C2H2-type zinc fingers follow at residues 1022 to 1044 (LKCPDCPYKSSEPDVLEKHRYYH), 1053 to 1075 (YACSDCTFNTYTPTALLQHLKLH), 1104 to 1126 (YYCKNCSFKTSIHRNFIEHSAYH), 1162 to 1184 (KYCKKCTFKCVSQSNFIEHLDRH), 1190 to 1212 (YKCYSCDYSDNTKSVVDFHQLNH), and 1261 to 1284 (LKCPSCEYFCHVSSELAFHMSVHH).

In terms of tissue distribution, expressed in neurons.

It is found in the nucleus. Its function is as follows. Probable transcriptional regulator, which participates in the transcriptional repression of the presenilin protein hop-1. Might play a role in the oxidative stress response. This is Suppressor of presenilin protein 4 (spr-4) from Caenorhabditis elegans.